A 165-amino-acid polypeptide reads, in one-letter code: Photosystem I assembly protein Ycf3 (165 aa).

TPR repeat units follow at residues 32–65 (AFTY…EIDP), 69–102 (SYIL…NPFL), and 117–150 (GEQA…TPGN).

The protein belongs to the Ycf3 family.

Its subcellular location is the plastid. The protein resides in the chloroplast thylakoid membrane. Essential for the assembly of the photosystem I (PSI) complex. May act as a chaperone-like factor to guide the assembly of the PSI subunits. The sequence is that of Photosystem I assembly protein Ycf3 from Spinacia oleracea (Spinach).